We begin with the raw amino-acid sequence, 361 residues long: 3-dehydroquinate synthase (361 aa).

This sequence belongs to the archaeal-type DHQ synthase family.

It catalyses the reaction 2-amino-2,3,7-trideoxy-D-lyxo-hept-6-ulosonate + NAD(+) + H2O = 3-dehydroquinate + NH4(+) + NADH + H(+). Functionally, catalyzes the oxidative deamination and cyclization of 2-amino-3,7-dideoxy-D-threo-hept-6-ulosonic acid (ADH) to yield 3-dehydroquinate (DHQ), which is fed into the canonical shikimic pathway of aromatic amino acid biosynthesis. This Methanococcus maripaludis (strain C5 / ATCC BAA-1333) protein is 3-dehydroquinate synthase.